Reading from the N-terminus, the 586-residue chain is Eukaryotic translation initiation factor 3 subunit D (586 aa).

The disordered stretch occupies residues 107-154 (FGRGGGTVFRGRAQRGGAGQRGGRAGFQRVGAGRGQGGDRYYDNRGAR). Residues 108 to 131 (GRGGGTVFRGRAQRGGAGQRGGRA) are compositionally biased toward gly residues. The segment at 301–315 (SLDLVTVNENAADAP) is RNA gate. Residues 566-577 (FEEDDEAAEEEQ) show a composition bias toward acidic residues. The disordered stretch occupies residues 566 to 586 (FEEDDEAAEEEQEAKGEVEEA).

The protein belongs to the eIF-3 subunit D family. Component of the eukaryotic translation initiation factor 3 (eIF-3) complex.

Its subcellular location is the cytoplasm. Functionally, mRNA cap-binding component of the eukaryotic translation initiation factor 3 (eIF-3) complex, which is involved in protein synthesis of a specialized repertoire of mRNAs and, together with other initiation factors, stimulates binding of mRNA and methionyl-tRNAi to the 40S ribosome. The eIF-3 complex specifically targets and initiates translation of a subset of mRNAs involved in cell proliferation. In the eIF-3 complex, eif3d specifically recognizes and binds the 7-methylguanosine cap of a subset of mRNAs. This chain is Eukaryotic translation initiation factor 3 subunit D, found in Emericella nidulans (strain FGSC A4 / ATCC 38163 / CBS 112.46 / NRRL 194 / M139) (Aspergillus nidulans).